Here is an 828-residue protein sequence, read N- to C-terminus: Periplasmic nitrate reductase (828 aa).

The tat-type signal signal peptide spans 1–32 (MNLSRRDFMKTNAAVAAAAVAGLAIPVKNVEA). Residues 38 to 94 (IKWDKAPCRFCGTGCSVLVGTQNGRVVASQGDPDADVNRGLNCIKGYFLPKIMYGKD) form the 4Fe-4S Mo/W bis-MGD-type domain. Residues cysteine 45, cysteine 48, cysteine 52, and cysteine 80 each contribute to the [4Fe-4S] cluster site. Residues lysine 82, glutamine 149, asparagine 174, cysteine 178, 211-218 (WGSNMAEM), 242-246 (STFEH), 261-263 (QSD), methionine 372, glutamine 376, asparagine 482, 508-509 (SD), lysine 531, aspartate 558, and 718-727 (TGRVLEHWHT) contribute to the Mo-bis(molybdopterin guanine dinucleotide) site. Phenylalanine 794 is a substrate binding site. Residues asparagine 802 and lysine 819 each coordinate Mo-bis(molybdopterin guanine dinucleotide).

It belongs to the prokaryotic molybdopterin-containing oxidoreductase family. NasA/NapA/NarB subfamily. In terms of assembly, component of the periplasmic nitrate reductase NapAB complex composed of NapA and NapB. It depends on [4Fe-4S] cluster as a cofactor. Mo-bis(molybdopterin guanine dinucleotide) serves as cofactor. Predicted to be exported by the Tat system. The position of the signal peptide cleavage has not been experimentally proven.

The protein resides in the periplasm. The catalysed reaction is 2 Fe(II)-[cytochrome] + nitrate + 2 H(+) = 2 Fe(III)-[cytochrome] + nitrite + H2O. Functionally, catalytic subunit of the periplasmic nitrate reductase complex NapAB. Receives electrons from NapB and catalyzes the reduction of nitrate to nitrite. The sequence is that of Periplasmic nitrate reductase from Pasteurella multocida (strain Pm70).